The following is a 445-amino-acid chain: Plasmid recombination enzyme (445 aa).

The DNA site is built by Y45 and Y113.

The protein belongs to the plasmid mobilization pre family.

This is Plasmid recombination enzyme from Bacillus thuringiensis.